The chain runs to 80 residues: CLAVATA3/ESR (CLE)-related protein 4 (80 aa).

The signal sequence occupies residues 1 to 22 (MASFKLWVCLILLLLEFSVHQC). The disordered stretch occupies residues 55 to 80 (SKDGQTVLGTLDSKRLSPGGPDPRHH). A hydroxyproline mark is found at proline 72 and proline 75. Proline 75 carries an O-linked (Ara...) hydroxyproline glycan.

Belongs to the CLV3/ESR signal peptide family. The O-glycosylation (arabinosylation) of the hydroxyproline Pro-75 enhances binding affinity of the CLE4p peptide for its receptor. Expressed in roots and seedlings.

The protein localises to the secreted. It is found in the extracellular space. Its function is as follows. Extracellular signal peptide that regulates cell fate. This is CLAVATA3/ESR (CLE)-related protein 4 from Arabidopsis thaliana (Mouse-ear cress).